The chain runs to 1268 residues: Vigilin (1268 aa).

S2 bears the N-acetylserine mark. T8 is subject to Phosphothreonine. 3 positions are modified to phosphoserine: S11, S31, and S35. KH domains follow at residues 150–212 (QASA…RHEV), 222–284 (RAVK…VARI), 295–357 (TTTI…LTEV), 364–424 (FTVS…QEQI), 435–497 (MDYV…KREL), 507–570 (ERTK…TKYM), and 581–643 (SYSI…RSRI). Phosphothreonine occurs at positions 295 and 296. The residue at position 317 (S317) is a Phosphoserine. At Y437 the chain carries Phosphotyrosine. Residue S645 is modified to Phosphoserine. 7 KH domains span residues 653–716 (IAEV…KKQL), 727–790 (SFTV…QKEL), 800–863 (VVED…KKRI), 873–967 (QVTL…KEAL), 972–1034 (PVTI…KAGL), 1052–1117 (SFKL…RDAI), and 1127–1190 (MVSE…IDHI). Residues 910–946 (PDREENPVHSVEPSIQENGDEAGEGREAKETDPGSPR) are disordered. Positions 932–946 (GEGREAKETDPGSPR) are enriched in basic and acidic residues. N6-acetyllysine is present on K991. Residues 1214–1268 (PAHEESKAPSKGFVVRDAPWTSNSSEKAPDMSSSEEIPTFGAQVAPKTLPWGPKR) form a disordered region. Polar residues predominate over residues 1233-1249 (WTSNSSEKAPDMSSSEE). Residue S1247 is modified to Phosphoserine.

It is found in the cytoplasm. Its subcellular location is the nucleus. In terms of biological role, appears to play a role in cell sterol metabolism. It may function to protect cells from over-accumulation of cholesterol. This is Vigilin (Hdlbp) from Rattus norvegicus (Rat).